Reading from the N-terminus, the 282-residue chain is Dihydroorotate dehydrogenase B (NAD(+)), electron transfer subunit homolog (282 aa).

The FAD-binding FR-type domain occupies 2 to 100 (GGTALNEIVK…VGPLGNPSEI (99 aa)). [2Fe-2S] cluster contacts are provided by cysteine 225, cysteine 228, and cysteine 240.

Belongs to the PyrK family. It depends on [2Fe-2S] cluster as a cofactor. FAD serves as cofactor.

This Thermotoga maritima (strain ATCC 43589 / DSM 3109 / JCM 10099 / NBRC 100826 / MSB8) protein is Dihydroorotate dehydrogenase B (NAD(+)), electron transfer subunit homolog.